The chain runs to 22 residues: Fuctinin-2 (22 aa).

Positions 1 to 22 are disordered; it reads ELPGLPKGEKEQQEAIEHIDEV. A compositionally biased stretch (basic and acidic residues) spans 7–22; it reads KGEKEQQEAIEHIDEV.

This sequence to human SET/PHAPII protein. As to quaternary structure, oligomer.

It is found in the cytoplasm. Its function is as follows. Has a role in the physiological regulation of fucosylation processes. This chain is Fuctinin-2, found in Rattus norvegicus (Rat).